A 211-amino-acid chain; its full sequence is Large ribosomal subunit protein uL4 (211 aa).

The tract at residues 40 to 85 is disordered; sequence QQAHSRQGTASTLTRSEVRGGGRKPYKQKGTGRARQGSVRTPLRPG. Over residues 41–54 the composition is skewed to polar residues; it reads QAHSRQGTASTLTR. Over residues 60–71 the composition is skewed to basic residues; the sequence is GGRKPYKQKGTG.

The protein belongs to the universal ribosomal protein uL4 family. As to quaternary structure, part of the 50S ribosomal subunit.

Functionally, one of the primary rRNA binding proteins, this protein initially binds near the 5'-end of the 23S rRNA. It is important during the early stages of 50S assembly. It makes multiple contacts with different domains of the 23S rRNA in the assembled 50S subunit and ribosome. Forms part of the polypeptide exit tunnel. This is Large ribosomal subunit protein uL4 from Synechococcus sp. (strain CC9311).